Reading from the N-terminus, the 516-residue chain is Prolyl 4-hydroxylase subunit alpha-1 (516 aa).

An N-linked (GlcNAc...) asparagine glycan is attached at Asn-97. One copy of the TPR repeat lies at 189–222; the sequence is VYILDYLSYAVYQQGDLSKAMMLTKRLLELDPEH. Asn-243 carries an N-linked (GlcNAc...) asparagine glycan. The Fe2OG dioxygenase domain maps to 393-501; the sequence is TAEELQVANY…KWVSNKWLHE (109 aa). Fe cation-binding residues include His-411, Asp-413, and His-482. Lys-492 lines the 2-oxoglutarate pocket.

Belongs to the P4HA family. Heterotetramer of two alpha chains and two beta chains (the beta chain is the multi-functional PDI). Requires Fe(2+) as cofactor. The cofactor is L-ascorbate.

The protein localises to the endoplasmic reticulum lumen. The catalysed reaction is L-prolyl-[collagen] + 2-oxoglutarate + O2 = trans-4-hydroxy-L-prolyl-[collagen] + succinate + CO2. Catalyzes the post-translational formation of 4-hydroxyproline in -Xaa-Pro-Gly- sequences in collagens and other proteins. This is Prolyl 4-hydroxylase subunit alpha-1 (P4HA1) from Gallus gallus (Chicken).